The primary structure comprises 443 residues: Chromosomal replication initiator protein DnaA (443 aa).

The tract at residues 1-73 is domain I, interacts with DnaA modulators; that stretch reads MYGDYRQIWE…YDAASKVTNR (73 aa). The interval 73–106 is domain II; that stretch reads RFIEIKILSEDEEEYREIKESIERENSSESTLLS. Residues 107–323 form a domain III, AAA+ region region; sequence TLNPKYTFDT…GALIRIVAFA (217 aa). ATP contacts are provided by Gly-151, Gly-153, Lys-154, and Thr-155. Residues 324–443 are domain IV, binds dsDNA; sequence TLTKSNIDLE…EELKKRIKGY (120 aa).

This sequence belongs to the DnaA family. Oligomerizes as a right-handed, spiral filament on DNA at oriC.

It is found in the cytoplasm. Plays an essential role in the initiation and regulation of chromosomal replication. ATP-DnaA binds to the origin of replication (oriC) to initiate formation of the DNA replication initiation complex once per cell cycle. Binds the DnaA box (a 9 base pair repeat at the origin) and separates the double-stranded (ds)DNA. Forms a right-handed helical filament on oriC DNA; dsDNA binds to the exterior of the filament while single-stranded (ss)DNA is stabiized in the filament's interior. The ATP-DnaA-oriC complex binds and stabilizes one strand of the AT-rich DNA unwinding element (DUE), permitting loading of DNA polymerase. After initiation quickly degrades to an ADP-DnaA complex that is not apt for DNA replication. Binds acidic phospholipids. In Caldanaerobacter subterraneus subsp. tengcongensis (strain DSM 15242 / JCM 11007 / NBRC 100824 / MB4) (Thermoanaerobacter tengcongensis), this protein is Chromosomal replication initiator protein DnaA.